Here is a 301-residue protein sequence, read N- to C-terminus: GTPase Era (301 aa).

The Era-type G domain maps to 4–173 (KAGFVALIGK…LECISKHLNP (170 aa)). Residues 12–19 (GKPNAGKS) are G1. 12 to 19 (GKPNAGKS) serves as a coordination point for GTP. Positions 38 to 42 (NATRK) are G2. Residues 64 to 67 (DTPG) are G3. GTP contacts are provided by residues 64–68 (DTPGL) and 122–125 (SKID). Positions 122 to 125 (SKID) are G4. Residues 152-154 (LSA) form a G5 region. The region spanning 204–280 (LSDEIPYESD…FLNLQVIAQK (77 aa)) is the KH type-2 domain.

The protein belongs to the TRAFAC class TrmE-Era-EngA-EngB-Septin-like GTPase superfamily. Era GTPase family. In terms of assembly, monomer.

It is found in the cytoplasm. Its subcellular location is the cell inner membrane. Its function is as follows. An essential GTPase that binds both GDP and GTP, with rapid nucleotide exchange. Plays a role in 16S rRNA processing and 30S ribosomal subunit biogenesis and possibly also in cell cycle regulation and energy metabolism. This Helicobacter pylori (strain P12) protein is GTPase Era.